Reading from the N-terminus, the 325-residue chain is GTP 3',8-cyclase (325 aa).

The Radical SAM core domain occupies 1–226; it reads MNTVNYLRIS…EGACYGNGPA (226 aa). Arg8 contributes to the GTP binding site. Cys15 and Cys19 together coordinate [4Fe-4S] cluster. Position 21 (Tyr21) interacts with S-adenosyl-L-methionine. Cys22 is a [4Fe-4S] cluster binding site. Arg60 lines the GTP pocket. Gly64 contributes to the S-adenosyl-L-methionine binding site. Ser91 serves as a coordination point for GTP. Residue Ser115 coordinates S-adenosyl-L-methionine. Lys152 contacts GTP. Met186 lines the S-adenosyl-L-methionine pocket. The [4Fe-4S] cluster site is built by Cys249 and Cys252. Residue 254 to 256 coordinates GTP; that stretch reads RVR. Cys266 contacts [4Fe-4S] cluster.

This sequence belongs to the radical SAM superfamily. MoaA family. As to quaternary structure, monomer and homodimer. Requires [4Fe-4S] cluster as cofactor.

The catalysed reaction is GTP + AH2 + S-adenosyl-L-methionine = (8S)-3',8-cyclo-7,8-dihydroguanosine 5'-triphosphate + 5'-deoxyadenosine + L-methionine + A + H(+). It functions in the pathway cofactor biosynthesis; molybdopterin biosynthesis. Its function is as follows. Catalyzes the cyclization of GTP to (8S)-3',8-cyclo-7,8-dihydroguanosine 5'-triphosphate. This is GTP 3',8-cyclase from Gloeobacter violaceus (strain ATCC 29082 / PCC 7421).